Consider the following 377-residue polypeptide: N-acetyldiaminopimelate deacetylase (377 aa).

Residue D69 is part of the active site. E128 acts as the Proton acceptor in catalysis.

Belongs to the peptidase M20A family. N-acetyldiaminopimelate deacetylase subfamily.

It catalyses the reaction N-acetyl-(2S,6S)-2,6-diaminopimelate + H2O = (2S,6S)-2,6-diaminopimelate + acetate. It participates in amino-acid biosynthesis; L-lysine biosynthesis via DAP pathway; LL-2,6-diaminopimelate from (S)-tetrahydrodipicolinate (acetylase route): step 3/3. Its function is as follows. Catalyzes the conversion of N-acetyl-diaminopimelate to diaminopimelate and acetate. In Streptococcus gordonii (strain Challis / ATCC 35105 / BCRC 15272 / CH1 / DL1 / V288), this protein is N-acetyldiaminopimelate deacetylase.